The following is a 383-amino-acid chain: Probable arabinan endo-1,5-alpha-L-arabinosidase D (383 aa).

The signal sequence occupies residues 1 to 22 (MVHITLPGLLLCLCLYLSVAPA). Residue aspartate 49 is the Proton acceptor of the active site. Residues asparagine 75, asparagine 163, and asparagine 206 are each glycosylated (N-linked (GlcNAc...) asparagine). The active-site Proton donor is the glutamate 227. A glycan (N-linked (GlcNAc...) asparagine) is linked at asparagine 325. Residue asparagine 356 is the site of GPI-anchor amidated asparagine attachment. Residues 357-383 (PGNSLQPPSSVSLQIVAFLCLVILFTL) constitute a propeptide, removed in mature form.

This sequence belongs to the glycosyl hydrolase 43 family.

The protein localises to the cell membrane. The catalysed reaction is Endohydrolysis of (1-&gt;5)-alpha-arabinofuranosidic linkages in (1-&gt;5)-arabinans.. The protein operates within glycan metabolism; L-arabinan degradation. Endo-1,5-alpha-L-arabinanase involved in degradation of pectin. Its preferred substrate is linear 1,5-alpha-L-arabinan. In Emericella nidulans (strain FGSC A4 / ATCC 38163 / CBS 112.46 / NRRL 194 / M139) (Aspergillus nidulans), this protein is Probable arabinan endo-1,5-alpha-L-arabinosidase D (abnD).